The following is a 222-amino-acid chain: Protein GrpE (222 aa).

The disordered stretch occupies residues 1 to 64; sequence MSDQNLGQGS…GEEILSDDDL (64 aa). Over residues 16 to 44 the composition is skewed to basic and acidic residues; the sequence is EEPIVRDKRRIDPETGKVREPQDLSHEEL. The span at 54-64 shows a compositional bias: acidic residues; that stretch reads QGEEILSDDDL.

Belongs to the GrpE family. In terms of assembly, homodimer.

The protein localises to the cytoplasm. Participates actively in the response to hyperosmotic and heat shock by preventing the aggregation of stress-denatured proteins, in association with DnaK and GrpE. It is the nucleotide exchange factor for DnaK and may function as a thermosensor. Unfolded proteins bind initially to DnaJ; upon interaction with the DnaJ-bound protein, DnaK hydrolyzes its bound ATP, resulting in the formation of a stable complex. GrpE releases ADP from DnaK; ATP binding to DnaK triggers the release of the substrate protein, thus completing the reaction cycle. Several rounds of ATP-dependent interactions between DnaJ, DnaK and GrpE are required for fully efficient folding. The sequence is that of Protein GrpE from Leifsonia xyli subsp. xyli (strain CTCB07).